A 390-amino-acid polypeptide reads, in one-letter code: tRNA(Met) cytidine acetate ligase (390 aa).

Residues 7–20, G101, N162, and R187 contribute to the ATP site; that span reads VVEY…HKLH.

This sequence belongs to the TmcAL family.

It localises to the cytoplasm. The catalysed reaction is cytidine(34) in elongator tRNA(Met) + acetate + ATP = N(4)-acetylcytidine(34) in elongator tRNA(Met) + AMP + diphosphate. Its function is as follows. Catalyzes the formation of N(4)-acetylcytidine (ac(4)C) at the wobble position of elongator tRNA(Met), using acetate and ATP as substrates. First activates an acetate ion to form acetyladenylate (Ac-AMP) and then transfers the acetyl group to tRNA to form ac(4)C34. The sequence is that of tRNA(Met) cytidine acetate ligase from Listeria monocytogenes serovar 1/2a (strain ATCC BAA-679 / EGD-e).